Consider the following 607-residue polypeptide: Zinc finger protein 750 (607 aa).

The CCHC-type zinc finger occupies 25–51; that stretch reads YQCFQCPFTCNIKSHLFNHMKYNLCKN. 4 residues coordinate Zn(2+): Cys27, Cys30, His43, and Cys49. Over residues 60–78 the composition is skewed to polar residues; that stretch reads MEQTGKASRASQHSPAFSH. Disordered regions lie at residues 60 to 133, 318 to 467, 482 to 511, and 575 to 607; these read MEQT…DKSE, RAVQ…SSQE, QALPNTSETPEKETISNAEVSTTESPQDLE, and GQKRANNRPLRHTNKRAKVKEPSRPRRKRSQNC. Basic and acidic residues-rich tracts occupy residues 79 to 133 and 318 to 334; these read NSKE…DKSE and RAVQEHNTGDKGIRESP. A compositionally biased stretch (low complexity) spans 369–380; sequence HSGSQSHIISGS. The span at 421–432 shows a compositional bias: acidic residues; it reads DKEEDEETEEEI. A compositionally biased stretch (basic and acidic residues) spans 452–462; it reads HYPDRELHYDS. Residues 496-507 are compositionally biased toward polar residues; it reads ISNAEVSTTESP. A compositionally biased stretch (basic residues) spans 579 to 592; the sequence is ANNRPLRHTNKRAK.

The protein localises to the nucleus. Functionally, transcription factor involved in epidermis differentiation. The chain is Zinc finger protein 750 (znf750) from Danio rerio (Zebrafish).